The following is a 218-amino-acid chain: MTALSEQAVDYNLLKNRFRGFFPVIIDVETAGFNAQTDALLELAAITLKMDENGLLVPDEKCHFHIQPFEGANINPESLKFNGIDIDNPLRGAISENVAMSELFKMVRHGQKKADCQRSVIVAHNATFDQSFVMAAAERTKIKRNPFHPFSIFDTATLSGFMFGQTVLVKGCQVANISFDGKKAHSALYDAERTAELFCYMVNHLKKLGGFPHVAINS.

The Exonuclease domain maps to 24–198 (VIIDVETAGF…YDAERTAELF (175 aa)). Mg(2+) is bound by residues Asp-27, Glu-29, His-185, and Asp-190. Catalysis depends on His-185, which acts as the Proton donor/acceptor.

This sequence belongs to the RNase T family. Homodimer. It depends on Mg(2+) as a cofactor.

Functionally, trims short 3' overhangs of a variety of RNA species, leaving a one or two nucleotide 3' overhang. Responsible for the end-turnover of tRNA: specifically removes the terminal AMP residue from uncharged tRNA (tRNA-C-C-A). Also appears to be involved in tRNA biosynthesis. The protein is Ribonuclease T of Histophilus somni (strain 129Pt) (Haemophilus somnus).